Consider the following 558-residue polypeptide: Putative transport protein VC0395_A0715/VC395_1212 (558 aa).

5 consecutive transmembrane segments (helical) span residues 5–25 (VVLL…AIGL), 37–57 (LGNS…GFSF), 66–86 (FMLF…GIFF), 92–112 (YLIL…FGGY), and 164–184 (VGYA…AKLL). 2 consecutive RCK C-terminal domains span residues 203–290 (RGLG…FRNG) and 291–374 (KEVF…KIGF). The next 6 helical transmembrane spans lie at 384–404 (LLAF…TMTF), 407–427 (VSFS…LGFL), 441–461 (ALNM…GLNA), 476–496 (VIGL…LVGA), 504–524 (ALLF…DVVN), and 537–557 (AGTY…FILL).

Belongs to the AAE transporter (TC 2.A.81) family. YbjL subfamily.

The protein resides in the cell membrane. The sequence is that of Putative transport protein VC0395_A0715/VC395_1212 from Vibrio cholerae serotype O1 (strain ATCC 39541 / Classical Ogawa 395 / O395).